The chain runs to 307 residues: MSNAPLVHLSDLQKRLRVFAVWEKVRNDGKVHWAIECFAEMFGVFLYVYFGLGSTAGWVIGNIIKETNLSSILQIGLAYAFGIWFAIGLCSSSSGGHFNPCVTLSFVVFKGFPKLKACRYIIAQILGAYIASALVYSQWNVLIEECTLGLIKAKAYDTTMFTPNGPAGIFALYLVPGAQSVPRALLNEFVNSTLIGMIIWAALDPTNMMVPPAMGPLFISLAYAAVIWGFATPAVALNTARDLGARLFAMSIWGTKAAGSGYSAIACLINIPATLLGVFLYEVFFTDSDRGKLLPILNGKKLKHIFS.

The Cytoplasmic portion of the chain corresponds to 1–40 (MSNAPLVHLSDLQKRLRVFAVWEKVRNDGKVHWAIECFAE). Residues 41 to 61 (MFGVFLYVYFGLGSTAGWVIG) form a helical membrane-spanning segment. Residues 62–68 (NIIKETN) lie on the Extracellular side of the membrane. Residues 69 to 89 (LSSILQIGLAYAFGIWFAIGL) form a helical membrane-spanning segment. Residues 90-120 (CSSSSGGHFNPCVTLSFVVFKGFPKLKACRY) lie on the Cytoplasmic side of the membrane. The NPA 1 motif lies at 99 to 101 (NPC). Residues 121–141 (IIAQILGAYIASALVYSQWNV) traverse the membrane as a helical segment. Topologically, residues 142–157 (LIEECTLGLIKAKAYD) are extracellular. The chain crosses the membrane as a helical span at residues 158–178 (TTMFTPNGPAGIFALYLVPGA). Positions 167 to 169 (AGI) match the NPA 2 motif. Over 179–183 (QSVPR) the chain is Cytoplasmic. Residues 184–203 (ALLNEFVNSTLIGMIIWAAL) form a helical membrane-spanning segment. At 204 to 216 (DPTNMMVPPAMGP) the chain is on the extracellular side. Residues 217–237 (LFISLAYAAVIWGFATPAVAL) form a helical membrane-spanning segment. The Cytoplasmic segment spans residues 238-264 (NTARDLGARLFAMSIWGTKAAGSGYSA). A helical membrane pass occupies residues 265–285 (IACLINIPATLLGVFLYEVFF). Residues 286-307 (TDSDRGKLLPILNGKKLKHIFS) lie on the Extracellular side of the membrane.

Belongs to the MIP/aquaporin (TC 1.A.8) family.

Its subcellular location is the membrane. It carries out the reaction H2O(in) = H2O(out). It catalyses the reaction NH4(+)(in) = NH4(+)(out). The enzyme catalyses urea(in) = urea(out). The catalysed reaction is glycerol(in) = glycerol(out). Its function is as follows. Water channel required to facilitate the transport of water across membranes. In addition to water, also shows strong ammonium transport activity. Also enables low but statistically significant glycerol and urea permeability. May be involved in fungal nitrogen (ammonium) support of the plant host in symbiosis. This Laccaria bicolor (strain S238N-H82 / ATCC MYA-4686) (Bicoloured deceiver) protein is Aquaporin Lacbi1:387054.